Consider the following 548-residue polypeptide: Viridiflorene synthase (548 aa).

Positions 301, 305, 444, 448, and 452 each coordinate Mg(2+). Positions 301–305 (DDTFD) match the DDXXD motif motif.

It belongs to the terpene synthase family. Tpsa subfamily. The cofactor is Mg(2+). In terms of tissue distribution, expressed in stem and leaf trichomes. Detected in roots, fruits and flowers.

The protein localises to the cytoplasm. The catalysed reaction is (2E,6E)-farnesyl diphosphate = viridiflorene + diphosphate. The protein operates within secondary metabolite biosynthesis; terpenoid biosynthesis. Functionally, sesquiterpene synthase involved in the production of viridiflorene from (E,E)-farnesyl diphosphate. Can also use (Z,Z)-FPP to make several unidentified sesquiterpenes. This Solanum lycopersicum (Tomato) protein is Viridiflorene synthase.